Reading from the N-terminus, the 363-residue chain is MEKQIAVLPGDGIGPEVTDAAIEVLQAVADRFGHTFSYKKALLGGCAIDEVGTPLPEETLDVCRHADGILLGAVGGPKWDTLPGHLRPEKGLLGLRKGLNLFANLRPVTVYDSLADASTLKNDVIDGVDLLIVRELTGGLYFGEPRERRGEGETEEVVDTLLYTRGEMRRIIRKAFELAMVRNKHVTSVDKANVLESSRMWREVANEVAQEFPEVTLEHMLVDNAAMQLIRRPKQFDVLVTENLFGDILSDEASMVTGSLGMLPSASLTSDGPGLYEPIHGSAPDIAGKGVANPLATIASCAMMLKYSFGLHEEAKTIEDAIEAVLKQGYRTADIAKPGEESSSTKAITDAVVEAIQASVDIS.

Residue 76-89 (GPKWDTLPGHLRPE) coordinates NAD(+). The substrate site is built by Arg96, Arg106, Arg134, and Asp223. Residues Asp223, Asp247, and Asp251 each coordinate Mg(2+). Residue 281 to 293 (GSAPDIAGKGVAN) participates in NAD(+) binding.

This sequence belongs to the isocitrate and isopropylmalate dehydrogenases family. LeuB type 1 subfamily. As to quaternary structure, homodimer. Requires Mg(2+) as cofactor. It depends on Mn(2+) as a cofactor.

Its subcellular location is the cytoplasm. The enzyme catalyses (2R,3S)-3-isopropylmalate + NAD(+) = 4-methyl-2-oxopentanoate + CO2 + NADH. Its pathway is amino-acid biosynthesis; L-leucine biosynthesis; L-leucine from 3-methyl-2-oxobutanoate: step 3/4. Catalyzes the oxidation of 3-carboxy-2-hydroxy-4-methylpentanoate (3-isopropylmalate) to 3-carboxy-4-methyl-2-oxopentanoate. The product decarboxylates to 4-methyl-2 oxopentanoate. The chain is 3-isopropylmalate dehydrogenase from Halalkalibacterium halodurans (strain ATCC BAA-125 / DSM 18197 / FERM 7344 / JCM 9153 / C-125) (Bacillus halodurans).